Here is a 237-residue protein sequence, read N- to C-terminus: Sugar fermentation stimulation protein homolog (237 aa).

The protein belongs to the SfsA family.

The sequence is that of Sugar fermentation stimulation protein homolog from Thioalkalivibrio sulfidiphilus (strain HL-EbGR7).